The sequence spans 167 residues: CASP-like protein 3 (167 aa).

Residues Met1–Lys2 lie on the Cytoplasmic side of the membrane. A helical membrane pass occupies residues Ile3–Met23. Residues Ala24–Asn48 are Extracellular-facing. Residues Tyr49–Val69 form a helical membrane-spanning segment. Topologically, residues Asn70–Pro80 are cytoplasmic. Residues Phe81–Ala101 form a helical membrane-spanning segment. Topologically, residues Ser102–Glu137 are extracellular. The helical transmembrane segment at Ala138 to Gly158 threads the bilayer. Topologically, residues Tyr159–Val167 are cytoplasmic.

Belongs to the Casparian strip membrane proteins (CASP) family. As to quaternary structure, homodimer and heterodimers.

The protein resides in the cell membrane. This is CASP-like protein 3 from Osmunda lancea (Fern).